We begin with the raw amino-acid sequence, 155 residues long: SsrA-binding protein (155 aa).

This sequence belongs to the SmpB family.

It localises to the cytoplasm. Required for rescue of stalled ribosomes mediated by trans-translation. Binds to transfer-messenger RNA (tmRNA), required for stable association of tmRNA with ribosomes. tmRNA and SmpB together mimic tRNA shape, replacing the anticodon stem-loop with SmpB. tmRNA is encoded by the ssrA gene; the 2 termini fold to resemble tRNA(Ala) and it encodes a 'tag peptide', a short internal open reading frame. During trans-translation Ala-aminoacylated tmRNA acts like a tRNA, entering the A-site of stalled ribosomes, displacing the stalled mRNA. The ribosome then switches to translate the ORF on the tmRNA; the nascent peptide is terminated with the 'tag peptide' encoded by the tmRNA and targeted for degradation. The ribosome is freed to recommence translation, which seems to be the essential function of trans-translation. In Bacillus cereus (strain B4264), this protein is SsrA-binding protein.